Reading from the N-terminus, the 392-residue chain is Tryptophan synthase beta chain (392 aa).

Residue Lys84 is modified to N6-(pyridoxal phosphate)lysine.

Belongs to the TrpB family. In terms of assembly, tetramer of two alpha and two beta chains. The cofactor is pyridoxal 5'-phosphate.

The catalysed reaction is (1S,2R)-1-C-(indol-3-yl)glycerol 3-phosphate + L-serine = D-glyceraldehyde 3-phosphate + L-tryptophan + H2O. The protein operates within amino-acid biosynthesis; L-tryptophan biosynthesis; L-tryptophan from chorismate: step 5/5. In terms of biological role, the beta subunit is responsible for the synthesis of L-tryptophan from indole and L-serine. The protein is Tryptophan synthase beta chain of Campylobacter jejuni subsp. doylei (strain ATCC BAA-1458 / RM4099 / 269.97).